A 777-amino-acid polypeptide reads, in one-letter code: Hepatocyte growth factor-regulated tyrosine kinase substrate (777 aa).

The VHS domain maps to 15-143 (ATSQLLLETD…IMKVEGHVFP (129 aa)). The segment at 160–220 (WVDAEECHRC…VCEPCFEQLN (61 aa)) adopts an FYVE-type zinc-finger fold. Zn(2+)-binding residues include Cys-166, Cys-169, Cys-182, Cys-185, Cys-190, and Cys-193. Lys-207 is subject to N6-acetyllysine. Zn(2+) is bound by residues Cys-212 and Cys-215. Residues 223-319 (AEGKAASTTE…SPVNSSAPLA (97 aa)) form a disordered region. Residues 225–541 (GKAASTTELP…QRLQEQEKER (317 aa)) are interaction with SNX1. In terms of domain architecture, UIM spans 258 to 277 (QEEEELQLALALSQSEAEEK). Low complexity predominate over residues 292 to 311 (AEPTPVASSAPPASSLYSSP). 3 positions are modified to phosphotyrosine: Tyr-308, Tyr-329, and Tyr-334. Residues 338–370 (KQEEARKSPTPSAPVPLTEPTAQPGEGHAIPAN) are disordered. The interval 443 to 541 (SINTMHPQLL…QRLQEQEKER (99 aa)) is interaction with SNAP25 and TRAK2. Residues 452 to 570 (LELLNQLDER…FSLPYAQLQA (119 aa)) form an interaction with STAM region. The tract at residues 478-777 (ARGALSALRE…GSEAQLISFD (300 aa)) is interaction with NF2. An N6-succinyllysine modification is found at Lys-549. The segment covering 645–658 (AAAQGPAGPTTSPA) has biased composition (low complexity). Disordered stretches follow at residues 645–698 (AAAQ…YMGS) and 712–777 (NLMP…ISFD). 2 stretches are compositionally biased toward polar residues: residues 659 to 698 (YSSYQPTPTQGYQTVASQAPQSLPAISQPPQSGTMGYMGS) and 730 to 739 (PYISGQQPVY). The segment covering 753-777 (PPVAQQPPAQGPPAQGSEAQLISFD) has biased composition (low complexity).

In terms of assembly, component of the ESCRT-0 complex composed of STAM or STAM2 and HGS. Part of a complex at least composed of HSG, STAM2 (or probably STAM) and EPS15. Interacts with STAM. Interacts with STAM2. Interacts with EPS15; the interaction is direct, calcium-dependent and inhibited by SNAP25. Identified in a complex with STAM and LITAF. Found in a complex with STAM and E3 ligase ITCH and DTX3L. Interacts with E3 ligase DTX3L; the interaction brings together STAM and HSG, promotes their recruitment to early endosomes and decreases STAM and HGS ubiquitination by ITCH. Interacts with NF2; the interaction is direct. Interacts with ubiquitin; the interaction is direct. Interacts with VPS37C. Interacts with SMAD1, SMAD2 and SMAD3. Interacts with TSG101; the interaction mediates the association with the ESCRT-I complex. Interacts with SNAP25; the interaction is direct and decreases with addition of increasing concentrations of free calcium. Interacts with SNX1; the interaction is direct. Component of a 550 kDa membrane complex at least composed of HGS and SNX1 but excluding EGFR. Interacts with TRAK1. Interacts with TRAK2. Component of the CART complex, at least composed of ACTN4, HGS/HRS, MYO5B and TRIM3. Interacts (via UIM domain) with UBQLN1 (via ubiquitin-like domain). Interacts with ARRDC3. Identified in a complex containing at least ARRDC4, AVPR2 and HGS. Interacts with LAPTM4B; promotes HGS ubiquitination. Post-translationally, phosphorylated on Tyr-334. A minor site of phosphorylation on Tyr-329 is detected. Phosphorylation occurs in response to EGF, IL-2, GM-CSF and HGF. In terms of processing, ubiquitinated by ITCH.

Its subcellular location is the cytoplasm. It localises to the early endosome membrane. The protein localises to the endosome. The protein resides in the multivesicular body membrane. In terms of biological role, involved in intracellular signal transduction mediated by cytokines and growth factors. When associated with STAM it suppresses DNA signaling upon stimulation by IL-2 and GM-CSF. Could be a direct effector of PI3-kinase in vesicular pathway via early endosomes and may regulate trafficking to early and late endosomes by recruiting clathrin. May concentrate ubiquitinated receptors within clathrin-coated regions. Involved in down-regulation of receptor tyrosine kinase via multivesicular body (MVBs) when complexed with STAM (ESCRT-0 complex). The ESCRT-0 complex binds ubiquitin and acts as a sorting machinery that recognizes ubiquitinated receptors and transfers them to further sequential lysosomal sorting/trafficking processes. May contribute to the efficient recruitment of SMADs to the activin receptor complex. Involved in receptor recycling via its association with the CART complex, a multiprotein complex required for efficient transferrin receptor recycling but not for EGFR degradation. This Bos taurus (Bovine) protein is Hepatocyte growth factor-regulated tyrosine kinase substrate (HGS).